The chain runs to 353 residues: GTPase Obg (353 aa).

Residues 1–159 (MRFVDEVVIN…RVIRLELKLL (159 aa)) form the Obg domain. An OBG-type G domain is found at 160-334 (ADVGLLGMPN…LCTAIMQELT (175 aa)). Residues 166 to 173 (GMPNAGKS), 191 to 195 (FTTLH), 213 to 216 (DIPG), 284 to 287 (NKMD), and 315 to 317 (SAA) contribute to the GTP site. Mg(2+) contacts are provided by Ser-173 and Thr-193.

This sequence belongs to the TRAFAC class OBG-HflX-like GTPase superfamily. OBG GTPase family. Monomer. Mg(2+) is required as a cofactor.

It is found in the cytoplasm. In terms of biological role, an essential GTPase which binds GTP, GDP and possibly (p)ppGpp with moderate affinity, with high nucleotide exchange rates and a fairly low GTP hydrolysis rate. Plays a role in control of the cell cycle, stress response, ribosome biogenesis and in those bacteria that undergo differentiation, in morphogenesis control. The chain is GTPase Obg from Dichelobacter nodosus (strain VCS1703A).